Reading from the N-terminus, the 176-residue chain is Ribonuclease mitogillin (176 aa).

Residues 1 to 27 (MVAIKNLFLLAATAVSVLAAPSPLDAR) form the signal peptide. Disulfide bonds link C32–C174 and C102–C158. H76 is an active-site residue. E122 functions as the Proton acceptor in the catalytic mechanism. Residue H163 is the Proton donor of the active site.

Belongs to the ribonuclease U2 family.

The protein resides in the secreted. In terms of biological role, this purine-specific ribonuclease cleaves 28S RNA in eukaryotic ribosomes, inhibits protein synthesis, and shows antitumor activity. The sequence is that of Ribonuclease mitogillin (mitF) from Aspergillus fumigatus (strain ATCC MYA-4609 / CBS 101355 / FGSC A1100 / Af293) (Neosartorya fumigata).